The primary structure comprises 187 residues: Transmembrane protein 11-B, mitochondrial (187 aa).

2 helical membrane passes run 79–95 (TAVL…LALP) and 102–119 (VSLP…LYGI).

It belongs to the TMEM11 family.

The protein localises to the mitochondrion inner membrane. Its function is as follows. Plays a role in mitochondrial morphogenesis. The polypeptide is Transmembrane protein 11-B, mitochondrial (tmem11-b) (Xenopus laevis (African clawed frog)).